The primary structure comprises 282 residues: Succinate dehydrogenase [ubiquinone] iron-sulfur subunit, mitochondrial (282 aa).

The transit peptide at 1–30 (MAAVVGVSLKRGFSATALGRVGLQFQACRE) directs the protein to the mitochondrion. Residues Lys53 and Lys57 each carry the N6-acetyllysine modification. In terms of domain architecture, 2Fe-2S ferredoxin-type spans 56-135 (DKPRMQTYKV…VSKIYPLPHM (80 aa)). [2Fe-2S] cluster-binding residues include Cys95, Cys100, Cys103, and Cys115. The interaction with SDHAF1 stretch occupies residues 148 to 220 (FYAQYKSIEP…PAVLMQAYRW (73 aa)). The region spanning 178–208 (DREKLDGLYECILCACCSTSCPSYWWNGDKY) is the 4Fe-4S ferredoxin-type domain. Cys188, Cys191, and Cys194 together coordinate [4Fe-4S] cluster. Residue Cys198 coordinates [3Fe-4S] cluster. Residue Trp203 coordinates a ubiquinone. The [3Fe-4S] cluster site is built by Cys245 and Cys251. Cys255 provides a ligand contact to [4Fe-4S] cluster.

The protein belongs to the succinate dehydrogenase/fumarate reductase iron-sulfur protein family. As to quaternary structure, component of complex II composed of four subunits: the flavoprotein (FP) SDHA, iron-sulfur protein (IP) SDHB, and a cytochrome b560 composed of SDHC and SDHD. Interacts with SDHAF1; the interaction is required for iron-sulfur cluster incorporation into SDHB. [2Fe-2S] cluster is required as a cofactor. [3Fe-4S] cluster serves as cofactor. It depends on [4Fe-4S] cluster as a cofactor.

The protein resides in the mitochondrion inner membrane. It carries out the reaction a quinone + succinate = fumarate + a quinol. The enzyme catalyses (R)-malate + a quinone = enol-oxaloacetate + a quinol. The catalysed reaction is (S)-malate + a quinone = enol-oxaloacetate + a quinol. It participates in carbohydrate metabolism; tricarboxylic acid cycle; fumarate from succinate (eukaryal route): step 1/1. Enol-oxaloacetate inhibits the succinate dehydrogenase activity. Functionally, iron-sulfur protein (IP) subunit of the succinate dehydrogenase complex (mitochondrial respiratory chain complex II), responsible for transferring electrons from succinate to ubiquinone (coenzyme Q). SDH also oxidizes malate to the non-canonical enol form of oxaloacetate, enol-oxaloacetate. Enol-oxaloacetate, which is a potent inhibitor of the succinate dehydrogenase activity, is further isomerized into keto-oxaloacetate. This Rattus norvegicus (Rat) protein is Succinate dehydrogenase [ubiquinone] iron-sulfur subunit, mitochondrial (Sdhb).